The primary structure comprises 397 residues: MQKKTLSDITIQGKRVLMRVDFNVPLDGNGEITDDKRIVEALPSIRKVLDNGGRLILMSHLGRPKGKVNPDFSLTPVALRLSELIDTPVIMAGDCIGTEVMQQALALQDGEVLLLENLRFHPEEEANDPEFSRELASLGEIYVNDAFGTAHRAHASTEGITHFVQTAVAGYLIEKELMYLGKALQSPERPFVAILGGSKISGKIDVIDNLFSKVDTVLVGGAMVFTFFKAQGLETGRSLVEDNKTELALELLAKAKSMGVRLILPEDVMAAPEISPDAPFHAVSVDQLAENEMGVDIGPKTAETYRKEILGAKTVLWNGPMGVFEIDNFAGGTIAVAEALAAATAKGATTIIGGGDSAAAVAKAGLADKMTHISTGGGASLEFLEGKELPGIAALNG.

Residues 21 to 23 (DFN), Arg-37, 60 to 63 (HLGR), Arg-119, and Arg-152 each bind substrate. ATP contacts are provided by residues Lys-203, Gly-294, Glu-325, and 354 to 357 (GGDS).

This sequence belongs to the phosphoglycerate kinase family. In terms of assembly, monomer.

Its subcellular location is the cytoplasm. It catalyses the reaction (2R)-3-phosphoglycerate + ATP = (2R)-3-phospho-glyceroyl phosphate + ADP. It functions in the pathway carbohydrate degradation; glycolysis; pyruvate from D-glyceraldehyde 3-phosphate: step 2/5. The sequence is that of Phosphoglycerate kinase from Chlorobium luteolum (strain DSM 273 / BCRC 81028 / 2530) (Pelodictyon luteolum).